The sequence spans 106 residues: Large ribosomal subunit protein bL21 (106 aa).

The protein belongs to the bacterial ribosomal protein bL21 family. Part of the 50S ribosomal subunit. Contacts protein L20.

Functionally, this protein binds to 23S rRNA in the presence of protein L20. In Xylella fastidiosa (strain 9a5c), this protein is Large ribosomal subunit protein bL21.